Reading from the N-terminus, the 461-residue chain is Photosynthetic NDH subunit of subcomplex B 1, chloroplastic (461 aa).

The transit peptide at 1-44 (MASSLPLLPKPISPFFKTPPFSTSKPLVFLNFQTRLTSRSSDVS) directs the protein to the chloroplast. The tract at residues 66–90 (NEYGSLFADGKQDEDPRPPDNPDNP) is disordered. Positions 75–85 (GKQDEDPRPPD) are enriched in basic and acidic residues.

In terms of assembly, part of the chloroplast NDH complex, composed of a mixture of chloroplast and nucleus encoded subunits. Component of the NDH subcomplex B, at least composed of PnsB1, PnsB2, PnsB3, PnsB4 and PnsB5.

It is found in the plastid. The protein resides in the chloroplast thylakoid membrane. In terms of biological role, NDH shuttles electrons from NAD(P)H:plastoquinone, via FMN and iron-sulfur (Fe-S) centers, to quinones in the photosynthetic chain and possibly in a chloroplast respiratory chain. The immediate electron acceptor for the enzyme in this species is believed to be plastoquinone. Couples the redox reaction to proton translocation, and thus conserves the redox energy in a proton gradient. This Arabidopsis thaliana (Mouse-ear cress) protein is Photosynthetic NDH subunit of subcomplex B 1, chloroplastic.